A 305-amino-acid polypeptide reads, in one-letter code: Elongation factor Ts (305 aa).

The interval 81–84 (TDFV) is involved in Mg(2+) ion dislocation from EF-Tu.

The protein belongs to the EF-Ts family.

The protein resides in the cytoplasm. Its function is as follows. Associates with the EF-Tu.GDP complex and induces the exchange of GDP to GTP. It remains bound to the aminoacyl-tRNA.EF-Tu.GTP complex up to the GTP hydrolysis stage on the ribosome. This is Elongation factor Ts from Nitratiruptor sp. (strain SB155-2).